We begin with the raw amino-acid sequence, 199 residues long: Recombination protein RecR (199 aa).

A C4-type zinc finger spans residues 58–73 (CVRCGNITNADLCGIC). Residues 81–176 (GELCVVEDVA…QVTSLAQGVP (96 aa)) form the Toprim domain.

It belongs to the RecR family.

May play a role in DNA repair. It seems to be involved in an RecBC-independent recombinational process of DNA repair. It may act with RecF and RecO. This is Recombination protein RecR from Cereibacter sphaeroides (strain ATCC 17029 / ATH 2.4.9) (Rhodobacter sphaeroides).